Reading from the N-terminus, the 349-residue chain is tRNA pseudouridine synthase D (349 aa).

Residue Phe26 participates in substrate binding. Catalysis depends on Asp79, which acts as the Nucleophile. Asn128 is a substrate binding site. The 149-residue stretch at 154–302 folds into the TRUD domain; it reads GVPNYFGSQR…VEGSRRAVLL (149 aa). Phe328 contacts substrate.

Belongs to the pseudouridine synthase TruD family.

The enzyme catalyses uridine(13) in tRNA = pseudouridine(13) in tRNA. Responsible for synthesis of pseudouridine from uracil-13 in transfer RNAs. This chain is tRNA pseudouridine synthase D, found in Yersinia pestis bv. Antiqua (strain Antiqua).